The primary structure comprises 429 residues: Gamma-glutamyl phosphate reductase (429 aa).

It belongs to the gamma-glutamyl phosphate reductase family.

The protein resides in the cytoplasm. The enzyme catalyses L-glutamate 5-semialdehyde + phosphate + NADP(+) = L-glutamyl 5-phosphate + NADPH + H(+). The protein operates within amino-acid biosynthesis; L-proline biosynthesis; L-glutamate 5-semialdehyde from L-glutamate: step 2/2. Catalyzes the NADPH-dependent reduction of L-glutamate 5-phosphate into L-glutamate 5-semialdehyde and phosphate. The product spontaneously undergoes cyclization to form 1-pyrroline-5-carboxylate. The protein is Gamma-glutamyl phosphate reductase of Bradyrhizobium sp. (strain BTAi1 / ATCC BAA-1182).